A 139-amino-acid chain; its full sequence is Putative nickel-responsive regulator (139 aa).

H76, H87, H89, and C95 together coordinate Ni(2+).

The protein belongs to the transcriptional regulatory CopG/NikR family. It depends on Ni(2+) as a cofactor.

Functionally, transcriptional regulator. This chain is Putative nickel-responsive regulator, found in Rhodopseudomonas palustris (strain HaA2).